A 239-amino-acid polypeptide reads, in one-letter code: Probable transcriptional regulatory protein Ajs_1898 (239 aa).

A disordered region spans residues 1–21 (MAGHSKWANIQHRKGRQDEKR).

It belongs to the TACO1 family.

The protein localises to the cytoplasm. This Acidovorax sp. (strain JS42) protein is Probable transcriptional regulatory protein Ajs_1898.